The primary structure comprises 89 residues: Small ribosomal subunit protein uS15 (89 aa).

Belongs to the universal ribosomal protein uS15 family. As to quaternary structure, part of the 30S ribosomal subunit. Forms a bridge to the 50S subunit in the 70S ribosome, contacting the 23S rRNA.

In terms of biological role, one of the primary rRNA binding proteins, it binds directly to 16S rRNA where it helps nucleate assembly of the platform of the 30S subunit by binding and bridging several RNA helices of the 16S rRNA. Functionally, forms an intersubunit bridge (bridge B4) with the 23S rRNA of the 50S subunit in the ribosome. The sequence is that of Small ribosomal subunit protein uS15 from Cereibacter sphaeroides (strain ATCC 17023 / DSM 158 / JCM 6121 / CCUG 31486 / LMG 2827 / NBRC 12203 / NCIMB 8253 / ATH 2.4.1.) (Rhodobacter sphaeroides).